The sequence spans 770 residues: Capsid protein (770 aa).

Disordered stretches follow at residues 645–682 (QRMQ…QKES) and 697–717 (WEDS…TQTV). Positions 646-656 (RMQQQPTTTDI) are enriched in polar residues. The span at 666-681 (RDTEVYHSSQEGEQKE) shows a compositional bias: basic and acidic residues. Low complexity predominate over residues 703-717 (EESGSQSSEEETQTV).

The protein belongs to the anelloviridae capsid protein family.

The protein localises to the virion. Functionally, self-assembles to form an icosahedral capsid with a T=1 symmetry, about 30 nm in diameter, and consisting of 60 capsid proteins. The capsid encapsulates the genomic DNA. Capsid protein is involved in attachment and entry into the host cell. This Homo sapiens (Human) protein is Capsid protein.